A 266-amino-acid polypeptide reads, in one-letter code: Ribosomal RNA small subunit methyltransferase A (266 aa).

S-adenosyl-L-methionine-binding residues include histidine 13, leucine 15, glycine 40, glutamate 61, aspartate 85, and asparagine 104.

The protein belongs to the class I-like SAM-binding methyltransferase superfamily. rRNA adenine N(6)-methyltransferase family. RsmA subfamily.

Its subcellular location is the cytoplasm. It catalyses the reaction adenosine(1518)/adenosine(1519) in 16S rRNA + 4 S-adenosyl-L-methionine = N(6)-dimethyladenosine(1518)/N(6)-dimethyladenosine(1519) in 16S rRNA + 4 S-adenosyl-L-homocysteine + 4 H(+). Specifically dimethylates two adjacent adenosines (A1518 and A1519) in the loop of a conserved hairpin near the 3'-end of 16S rRNA in the 30S particle. May play a critical role in biogenesis of 30S subunits. This Parabacteroides distasonis (strain ATCC 8503 / DSM 20701 / CIP 104284 / JCM 5825 / NCTC 11152) protein is Ribosomal RNA small subunit methyltransferase A.